The sequence spans 129 residues: SOSS complex subunit C homolog (129 aa).

Residues 105-129 form a disordered region; it reads RLEPLPSPATTPTTPNAPPSHSISK.

It belongs to the SOSS-C family.

In Drosophila simulans (Fruit fly), this protein is SOSS complex subunit C homolog.